Reading from the N-terminus, the 61-residue chain is Small ribosomal subunit protein uS14 (61 aa).

Residues Cys24, Cys27, Cys40, and Cys43 each contribute to the Zn(2+) site.

Belongs to the universal ribosomal protein uS14 family. Zinc-binding uS14 subfamily. In terms of assembly, part of the 30S ribosomal subunit. Contacts proteins S3 and S10. It depends on Zn(2+) as a cofactor.

Functionally, binds 16S rRNA, required for the assembly of 30S particles and may also be responsible for determining the conformation of the 16S rRNA at the A site. This is Small ribosomal subunit protein uS14 from Campylobacter jejuni subsp. jejuni serotype O:6 (strain 81116 / NCTC 11828).